A 938-amino-acid chain; its full sequence is Mediator of RNA polymerase II transcription subunit 16 (938 aa).

This sequence belongs to the Mediator complex subunit 16 family. In terms of assembly, component of the Mediator complex.

It is found in the nucleus. In terms of biological role, component of the Mediator complex, a coactivator involved in the regulated transcription of nearly all RNA polymerase II-dependent genes. Mediator functions as a bridge to convey information from gene-specific regulatory proteins to the basal RNA polymerase II transcription machinery. Mediator is recruited to promoters by direct interactions with regulatory proteins and serves as a scaffold for the assembly of a functional preinitiation complex with RNA polymerase II and the general transcription factors. The polypeptide is Mediator of RNA polymerase II transcription subunit 16 (SIN4) (Eremothecium gossypii (strain ATCC 10895 / CBS 109.51 / FGSC 9923 / NRRL Y-1056) (Yeast)).